Here is a 1073-residue protein sequence, read N- to C-terminus: Activated Cdc42 kinase Ack (1073 aa).

The disordered stretch occupies residues 88 to 110 (IGGGKQPSSKKQSSAARESSQGN). A Protein kinase domain is found at 123–383 (ITMGLKLGDG…PTFAALKEYL (261 aa)). Residues 129-137 (LGDGSFGVV) and K156 contribute to the ATP site. The active-site Proton acceptor is the D250. The SH3 domain maps to 386-446 (MSPPVMRASR…PRNLLEQRKV (61 aa)). Disordered stretches follow at residues 484-506 (QRKC…SSKQ), 803-834 (PLKN…VEAA), and 862-882 (AQPP…HQQQ). Low complexity predominate over residues 812–826 (SVHSNHSSPSSTASP). One can recognise a UBA domain in the interval 1029 to 1072 (GLATRHYKIDQLARLGVAGRPQCEQALQQTNWSLEVAAELLLNA).

This sequence belongs to the protein kinase superfamily. Tyr protein kinase family. As to quaternary structure, interacts with yki and ex. Interacts with drk. Likely to be a member of an axonal guidance receptor complex that includes SH3PX1, dock and Dscam. Interacts (via N-terminus) with dock. Interacts with SH3PX1 (via SH3 domain). It depends on Mg(2+) as a cofactor. Post-translationally, phosphorylated. Autophosphorylated. Detected in ovaries (at protein level). In adults, relatively higher expression in the head compared to the body.

Its subcellular location is the cytoplasm. It localises to the cytoplasmic vesicle. The protein resides in the clathrin-coated vesicle. The catalysed reaction is L-tyrosyl-[protein] + ATP = O-phospho-L-tyrosyl-[protein] + ADP + H(+). It carries out the reaction L-threonyl-[protein] + ATP = O-phospho-L-threonyl-[protein] + ADP + H(+). Its function is as follows. Non-receptor tyrosine-protein and serine/threonine-protein kinase that is implicated in diverse biological functions such as cell survival, cell differentiation, cell growth and proliferation. Phosphorylates SH3PX1 and ex. Phosphorylates SH3PX1 predominantly on 'Tyr-56', which likely promotes the recruitment of SH3PX1 to an axonal guidance receptor complex that includes dock and Dscam; because phosphorylation of SH3PX1 increases its interaction with the complex member dock while decreasing its interaction with the actin cytoskeleton modulator WASp. In the wing and eye, promotes tissue growth, and during embryogenesis coordinates cell shape changes required for correct dorsal closure. Functions in the negative regulation of the Hippo/SWH (Sav/Wts/Hpo) signaling pathway by enhancing yki activity thereby promoting cell proliferation and inhibiting apoptosis. This is accomplished, at least in part, by phosphorylating ex thereby reducing its ability to efficiently activate the Hippo signaling cascade. In the eye disk, wing disk and possibly spermatids, inhibits programmed cell death induced by hid and rpr through a mechanism that is independent of the MAP kinase signal transduction pathway. Essential for male and female fertility. During oogenesis required for the correct temporal assembly, and consequently the catalytic activity of long Ctps filaments (cytoophidium) in the germline nurse cells, likely by phosphorylating an unidentified substrate that is essential for linking individual Ctps filaments into large, catalytically active assemblies. This is Activated Cdc42 kinase Ack from Drosophila melanogaster (Fruit fly).